The primary structure comprises 170 residues: Shikimate kinase (170 aa).

11–16 (GAGKTT) contacts ATP. Thr15 contributes to the Mg(2+) binding site. Residues Asp33, Arg57, and Gly80 each contribute to the substrate site. Arg119 provides a ligand contact to ATP. Arg141 lines the substrate pocket.

Belongs to the shikimate kinase family. As to quaternary structure, monomer. Mg(2+) serves as cofactor.

Its subcellular location is the cytoplasm. It carries out the reaction shikimate + ATP = 3-phosphoshikimate + ADP + H(+). It participates in metabolic intermediate biosynthesis; chorismate biosynthesis; chorismate from D-erythrose 4-phosphate and phosphoenolpyruvate: step 5/7. Catalyzes the specific phosphorylation of the 3-hydroxyl group of shikimic acid using ATP as a cosubstrate. This chain is Shikimate kinase, found in Azobacteroides pseudotrichonymphae genomovar. CFP2.